Consider the following 96-residue polypeptide: Probable RNA-binding protein YqeI (96 aa).

The 96-residue stretch at 1–96 (MLTGKQKRFL…SKENKQIELP (96 aa)) folds into the CRM domain.

This chain is Probable RNA-binding protein YqeI (yqeI), found in Bacillus subtilis (strain 168).